The sequence spans 175 residues: Microfibril-associated glycoprotein 3 (175 aa).

The Cytoplasmic portion of the chain corresponds to 1-175 (FRTEGAEKLQ…KDGSFESCQL (175 aa)). The tract at residues 85 to 175 (KERPALNAQD…KDGSFESCQL (91 aa)) is disordered. The segment covering 145-175 (QDSSHFSPPDDTGSTESNSNYKDGSFESCQL) has biased composition (polar residues).

Glycosylated.

Its subcellular location is the cell membrane. Functionally, component of the elastin-associated microfibrils. The chain is Microfibril-associated glycoprotein 3 (MFAP3) from Bos taurus (Bovine).